A 691-amino-acid polypeptide reads, in one-letter code: Protein 4.2 (691 aa).

A lipid anchor (N-myristoyl glycine) is attached at glycine 2. A band 3 binding region spans residues 31-39 (LFVRRGQPF). The residue at position 248 (serine 248) is a Phosphoserine; by PKA.

This sequence belongs to the transglutaminase superfamily. Transglutaminase family. As to quaternary structure, component of the ankyrin-1 complex in the erythrocyte, composed of ANK1, RHCE, RHAG, SLC4A1, EPB42, GYPA, GYPB and AQP1. Interacts with SLC4A1 (via the cytoplasmic domain); this interaction is mediated by the SLC4A1 Band 3-I dimer. Interacts with ANK1 (via ANK 1-13 repeats). Interacts with AQP1 (via the C-terminal). In terms of processing, both cAMP-dependent kinase (CAPK) and another kinase present in the red-blood cells seem to be able to phosphorylate EPB42.

The protein localises to the cell membrane. The protein resides in the cytoplasm. Its subcellular location is the cytoskeleton. Functionally, component of the ankyrin-1 complex, a multiprotein complex involved in the stability and shape of the erythrocyte membrane. The chain is Protein 4.2 from Homo sapiens (Human).